Here is a 340-residue protein sequence, read N- to C-terminus: Heat-inducible transcription repressor HrcA (340 aa).

It belongs to the HrcA family.

In terms of biological role, negative regulator of class I heat shock genes (grpE-dnaK-dnaJ and groELS operons). Prevents heat-shock induction of these operons. This is Heat-inducible transcription repressor HrcA from Phytoplasma australiense.